We begin with the raw amino-acid sequence, 875 residues long: Phosphoenolpyruvate carboxylase (875 aa).

Catalysis depends on residues His137 and Lys542.

This sequence belongs to the PEPCase type 1 family. Requires Mg(2+) as cofactor.

It carries out the reaction oxaloacetate + phosphate = phosphoenolpyruvate + hydrogencarbonate. Its function is as follows. Forms oxaloacetate, a four-carbon dicarboxylic acid source for the tricarboxylic acid cycle. This Pseudomonas entomophila (strain L48) protein is Phosphoenolpyruvate carboxylase.